Reading from the N-terminus, the 2472-residue chain is Centrosomal protein of 290 kDa (2472 aa).

The tract at residues 1–689 (MPPNIKWKEL…MESKNAEGIF (689 aa)) is self-association (with itself or C-terminus). 3 coiled-coil regions span residues 59–747 (MKMK…LRQS), 1129–1392 (RQRI…QQSK), and 1459–1492 (QVIL…ILSR). Residues 128–164 (DRELEDMEKELDKEKKVNEQLALRNEEAENENSKLRR) are disordered. Residues 137 to 164 (ELDKEKKVNEQLALRNEEAENENSKLRR) are compositionally biased toward basic and acidic residues. Residues 690-890 (DASLHLKAQV…TVLQVNEKSL (201 aa)) form an interaction with IQCB1 region. Disordered regions lie at residues 1691-1713 (AHKD…SRAP) and 2451-2472 (PSPL…FPIY). The segment covering 1697-1713 (SLKSELQAQKEANSRAP) has biased composition (polar residues). Positions 1960 to 2472 (TTGMTVDQVL…GESPHSFPIY (513 aa)) are self-association (with itself or N-terminus).

Part of the tectonic-like complex (also named B9 complex). Interacts with ATF4 via its N-terminal region. Associates with the BBSome complex, interacting (via N-terminus) with BBS4. Interacts with IQCB1/NPHP5; IQCB1 and CEP290/NPHP6 are proposed to form a functional NPHP5-6 module localized to the centrosome. Interacts with NPHP4; the interaction likely requires additional interactors. Interacts with ZNF423, FAM161A, CEP162, CEP162, CEP131, TALPID3, CCDC13, CC2D2A, RPGRIP1. Can self-associate (homo- or heteromeric). Interacts with CCP110; required for suppressing cilia formation. Interacts with RPGR. Associates (via C-terminus) with microtubules; association to microtubule is reduced in response to cellular stress, such as ultraviolet light (UV) radiation or heat shock, in a process that requires p38 MAP kinase signaling. Interacts with FAM161A. Interacts with PCM1. Interacts with CCDC66. Interacts with ARMC9 and CSPP1. In terms of processing, ubiquitinated. May undergo monoubiquitination; monoubiquitination is inhibited in response to cellular stress, such as ultraviolet light (UV) radiation or heat shock, but does not cause its displacement from centriolar satellites. As to expression, expressed in multiple organs during early postnatal development, with highest levels in hindbrain.

It is found in the cytoplasm. It localises to the cytoskeleton. The protein resides in the microtubule organizing center. Its subcellular location is the centrosome. The protein localises to the centriolar satellite. It is found in the nucleus. It localises to the centriole. The protein resides in the cell projection. Its subcellular location is the cilium. The protein localises to the cilium basal body. It is found in the cytoplasmic vesicle. Involved in early and late steps in cilia formation. Its association with CCP110 is required for inhibition of primary cilia formation by CCP110. May play a role in early ciliogenesis in the disappearance of centriolar satellites and in the transition of primary ciliar vesicles (PCVs) to capped ciliary vesicles (CCVs). Required for the centrosomal recruitment of RAB8A and for the targeting of centriole satellite proteins to centrosomes such as of PCM1. Required for the correct localization of ciliary and phototransduction proteins in retinal photoreceptor cells; may play a role in ciliary transport processes. Required for efficient recruitment of RAB8A to primary cilium. In the ciliary transition zone is part of the tectonic-like complex (also named B9 complex) which is required for tissue-specific ciliogenesis and may regulate ciliary membrane composition. Involved in regulation of the BBSome complex integrity, specifically for presence of BBS2, BBS5 and BBS8/TTC8 in the complex, and in ciliary targeting of selected BBSome cargos. May play a role in controlling entry of the BBSome complex to cilia possibly implicating IQCB1/NPHP5. Activates ATF4-mediated transcription. The sequence is that of Centrosomal protein of 290 kDa from Mus musculus (Mouse).